The sequence spans 250 residues: AA9 family lytic polysaccharide monooxygenase B (250 aa).

A signal peptide spans 1-21 (MTLSKITSIAGLLASASLVAG). Residues H22 and H107 each contribute to the Cu(2+) site. Position 22 is a methylhistidine (H22). 2 disulfide bridges follow: C77-C199 and C118-C122. N159 is a glycosylation site (N-linked (GlcNAc...) asparagine). H185 and Q194 together coordinate O2. Residue Y196 coordinates Cu(2+).

It belongs to the polysaccharide monooxygenase AA9 family. The cofactor is Cu(2+). The catalytically essential N-terminal histidine His-22 is post-translationally modified by methylation to prevent protonation of the histidine side chain, and protect the critical active site of the enzyme from oxidative damage.

Its subcellular location is the secreted. It carries out the reaction [(1-&gt;4)-beta-D-glucosyl]n+m + reduced acceptor + O2 = 4-dehydro-beta-D-glucosyl-[(1-&gt;4)-beta-D-glucosyl]n-1 + [(1-&gt;4)-beta-D-glucosyl]m + acceptor + H2O.. Lytic polysaccharide monooxygenase (LPMO) that depolymerizes crystalline and amorphous polysaccharides via the oxidation of scissile alpha- or beta-(1-4)-glycosidic bonds, yielding C1 and C4 oxidation products. Catalysis by LPMOs requires the reduction of the active-site copper from Cu(II) to Cu(I) by a reducing agent and H(2)O(2) or O(2) as a cosubstrate. Shows activity on phosphoric acid swollen cellulose, on NaOH pretreated soy spent flakes as well as on crystalline cellulose (Avicel). Does not have a positive effect on cel6A activity, but acts synergistically with endoglucanase egl7. This chain is AA9 family lytic polysaccharide monooxygenase B, found in Aspergillus fumigatus (strain ATCC MYA-4609 / CBS 101355 / FGSC A1100 / Af293) (Neosartorya fumigata).